The sequence spans 423 residues: Putative protein phosphatase 2C 50 (423 aa).

A PPM-type phosphatase domain is found at Ile52 to Leu380. Residues Asp74, Gly75, Asp320, and Asp371 each coordinate Mn(2+).

It belongs to the PP2C family. It depends on Mg(2+) as a cofactor. Requires Mn(2+) as cofactor.

It catalyses the reaction O-phospho-L-seryl-[protein] + H2O = L-seryl-[protein] + phosphate. It carries out the reaction O-phospho-L-threonyl-[protein] + H2O = L-threonyl-[protein] + phosphate. The polypeptide is Putative protein phosphatase 2C 50 (Arabidopsis thaliana (Mouse-ear cress)).